A 644-amino-acid chain; its full sequence is Chaperone protein DnaK (644 aa).

A Phosphothreonine; by autocatalysis modification is found at Thr195. The disordered stretch occupies residues 598 to 644 (KQAAPGAGAPGAGPGPEAAGGAQQAQAEPKKDEGVIDAEYVDVDEKK). Residues 612-624 (GPEAAGGAQQAQA) are compositionally biased toward low complexity. The segment covering 632–644 (VIDAEYVDVDEKK) has biased composition (acidic residues).

Belongs to the heat shock protein 70 family.

In terms of biological role, acts as a chaperone. This chain is Chaperone protein DnaK, found in Koribacter versatilis (strain Ellin345).